We begin with the raw amino-acid sequence, 875 residues long: Serine/threonine-protein kinase D2 (875 aa).

The tract at residues 1–33 (MAAAPSHPAGLPCSPGPGSPPPPGGSDLQSLPP) is disordered. Residues 14 to 24 (SPGPGSPPPPG) are compositionally biased toward pro residues. Phosphoserine occurs at positions 26 and 30. Tyrosine 87 carries the post-translational modification Phosphotyrosine. Residues 138–188 (PHALTVHSYRAPAFCDHCGEMLFGLVRQGLKCDGCGLNYHKRCAFSIPNNC) form a Phorbol-ester/DAG-type 1 zinc finger. 8 positions are modified to phosphoserine: serine 197, serine 198, serine 200, serine 203, serine 206, serine 211, serine 212, and serine 214. Residues 224–247 (RSTTDLLPRRPPSSSSSSSSSSFY) form a disordered region. The segment covering 236-245 (SSSSSSSSSS) has biased composition (low complexity). Serine 244 bears the Phosphoserine; by CSNK1D and CSNK1E mark. Phosphoserine is present on serine 245. A Phorbol-ester/DAG-type 2 zinc finger spans residues 265–315 (PHTFLIHSYTRPTVCQACKKLLKGLFRQGLQCKDCKFNCHKRCATRVPNDC). The PH domain maps to 398–510 (TTLREGWVVH…WETAIRQALM (113 aa)). Position 408 is a phosphotyrosine (tyrosine 408). A Phosphotyrosine; by ABL1 modification is found at tyrosine 439. A Phosphoserine modification is found at serine 519. The region spanning 552-808 (IFPDEVLGSG…VDKSLSHPWL (257 aa)) is the Protein kinase domain. ATP-binding positions include 558 to 566 (LGSGQFGVV) and lysine 581. Aspartate 675 (proton acceptor) is an active-site residue. Serine 707 is modified (phosphoserine; by PKC). Serine 711 carries the phosphoserine modification. At tyrosine 718 the chain carries Phosphotyrosine; by ABL1. An Important for ABL1-mediated Tyr-718 phosphorylation motif is present at residues 725-727 (LNQ). Serine 873 carries the post-translational modification Phosphoserine; by autocatalysis.

Belongs to the protein kinase superfamily. CAMK Ser/Thr protein kinase family. PKD subfamily. As to quaternary structure, interacts (via C-terminus) with LCK. Interacts (via N-terminus and zing-finger domain 1 and 2) with PRKCD in response to oxidative stress; the interaction is independent of PRKD2 tyrosine phosphorylation. The cofactor is Mg(2+). In terms of processing, phosphorylation of Ser-873 correlates with the activation status of the kinase. Ser-707 is probably phosphorylated by PKC. Phosphorylation at Ser-244 by CSNK1D and CSNK1E promotes nuclear localization and substrate targeting. Phosphorylation at Ser-244, Ser-707 and Ser-711 is required for nuclear localization. Phosphorylated at Tyr-438 by ABL1 in response to oxidative stress. Phosphorylated at Tyr-718 by ABL1 specifically in response to oxidative stress; requires prior phosphorylation at Ser-707 or/and Ser-711.

Its subcellular location is the cytoplasm. The protein localises to the cell membrane. The protein resides in the golgi apparatus. It localises to the trans-Golgi network. The catalysed reaction is L-seryl-[protein] + ATP = O-phospho-L-seryl-[protein] + ADP + H(+). The enzyme catalyses L-threonyl-[protein] + ATP = O-phospho-L-threonyl-[protein] + ADP + H(+). Activated by DAG and phorbol esters. Phorbol-ester/DAG-type domains bind DAG, mediating translocation to membranes. Autophosphorylation of Ser-711 and phosphorylation of Ser-707 by PKC relieves auto-inhibition by the PH domain. Catalytic activity is further increased by phosphorylation at Tyr-718 in response to oxidative stress. Its function is as follows. Serine/threonine-protein kinase that converts transient diacylglycerol (DAG) signals into prolonged physiological effects downstream of PKC, and is involved in the regulation of cell proliferation via MAPK1/3 (ERK1/2) signaling, oxidative stress-induced NF-kappa-B activation, inhibition of HDAC7 transcriptional repression, signaling downstream of T-cell antigen receptor (TCR) and cytokine production, and plays a role in Golgi membrane trafficking, angiogenesis, secretory granule release and cell adhesion. May potentiate mitogenesis induced by the neuropeptide bombesin by mediating an increase in the duration of MAPK1/3 (ERK1/2) signaling, which leads to accumulation of immediate-early gene products including FOS that stimulate cell cycle progression. In response to oxidative stress, is phosphorylated at Tyr-438 and Tyr-718 by ABL1, which leads to the activation of PRKD2 without increasing its catalytic activity, and mediates activation of NF-kappa-B. In response to the activation of the gastrin receptor CCKBR, is phosphorylated at Ser-244 by CSNK1D and CSNK1E, translocates to the nucleus, phosphorylates HDAC7, leading to nuclear export of HDAC7 and inhibition of HDAC7 transcriptional repression of NR4A1/NUR77. Upon TCR stimulation, is activated independently of ZAP70, translocates from the cytoplasm to the nucleus and is required for interleukin-2 (IL2) promoter up-regulation. During adaptive immune responses, is required in peripheral T-lymphocytes for the production of the effector cytokines IL2 and IFNG after TCR engagement and for optimal induction of antibody responses to antigens. In epithelial cells stimulated with lysophosphatidic acid (LPA), is activated through a PKC-dependent pathway and mediates LPA-stimulated interleukin-8 (IL8) secretion via a NF-kappa-B-dependent pathway. During TCR-induced T-cell activation, interacts with and is activated by the tyrosine kinase LCK, which results in the activation of the NFAT transcription factors. In the trans-Golgi network (TGN), regulates the fission of transport vesicles that are on their way to the plasma membrane and in polarized cells is involved in the transport of proteins from the TGN to the basolateral membrane. Plays an important role in endothelial cell proliferation and migration prior to angiogenesis, partly through modulation of the expression of KDR/VEGFR2 and FGFR1, two key growth factor receptors involved in angiogenesis. In secretory pathway, is required for the release of chromogranin-A (CHGA)-containing secretory granules from the TGN. Downstream of PRKCA, plays important roles in angiotensin-2-induced monocyte adhesion to endothelial cells. The chain is Serine/threonine-protein kinase D2 (Prkd2) from Rattus norvegicus (Rat).